Reading from the N-terminus, the 525-residue chain is Bifunctional pantoate ligase/cytidylate kinase (525 aa).

The interval 1–292 (MDNVPIIRTV…VGSARLIDNM (292 aa)) is pantoate--beta-alanine ligase. 44-51 (MGALHAGH) is a binding site for ATP. The active-site Proton donor is His51. Gln75 provides a ligand contact to (R)-pantoate. Gln75 contributes to the beta-alanine binding site. 162-165 (GQKD) contributes to the ATP binding site. (R)-pantoate is bound at residue Gln168. ATP contacts are provided by residues Ile191 and 199-202 (LSSR). The tract at residues 293 to 525 (LLDARLPILA…LYQERFPDRA (233 aa)) is cytidylate kinase.

It in the N-terminal section; belongs to the pantothenate synthetase family. This sequence in the C-terminal section; belongs to the cytidylate kinase family. Type 1 subfamily.

It localises to the cytoplasm. It catalyses the reaction (R)-pantoate + beta-alanine + ATP = (R)-pantothenate + AMP + diphosphate + H(+). The enzyme catalyses CMP + ATP = CDP + ADP. The catalysed reaction is dCMP + ATP = dCDP + ADP. The protein operates within cofactor biosynthesis; (R)-pantothenate biosynthesis; (R)-pantothenate from (R)-pantoate and beta-alanine: step 1/1. Functionally, catalyzes the condensation of pantoate with beta-alanine in an ATP-dependent reaction via a pantoyl-adenylate intermediate. Its function is as follows. Catalyzes the transfer of a phosphate group from ATP to either CMP or dCMP to form CDP or dCDP and ADP, respectively. This is Bifunctional pantoate ligase/cytidylate kinase from Acaryochloris marina (strain MBIC 11017).